The following is a 264-amino-acid chain: Protein OXIDATIVE STRESS 3 LIKE 1 (264 aa).

Disordered stretches follow at residues 1-76 and 178-225; these read MDCV…GPLE and TGEG…QGSF. Positions 29-43 are enriched in low complexity; it reads PSDSSSSPSSSASSS. Residues 47-56 show a composition bias toward basic and acidic residues; the sequence is NSDDGEKSSE. The span at 57 to 67 shows a compositional bias: acidic residues; the sequence is DGGDDAGENEV. Positions 179-201 are enriched in low complexity; the sequence is GEGSSSGGDSSPGSSPTTSGSPP. The span at 203-212 shows a compositional bias: basic residues; that stretch reads QLHHHQHQMK.

It localises to the nucleus. Its function is as follows. Promotes slightly the tolerance to zinc (Zn) and to oxidizing chemicals (e.g. diamide). The sequence is that of Protein OXIDATIVE STRESS 3 LIKE 1 from Arabidopsis thaliana (Mouse-ear cress).